Here is a 227-residue protein sequence, read N- to C-terminus: MMGIRIAIDGPASSGKSTVAKIIAKKLGYVYLDTGAMYRSATYLALQNDTDLTDERAIVKLLKDYPISFGRRKDDSEQLVFVGNVEVSHPIRENEVTNNVSTVAALPLVRKTLVDLQQQLAKKGGIVMDGRDIGTVVLPDAELKIFLIASVEERAERRYRENLEKGIQTDFNTLKKEIAERDYKDSHRKISPLKPAADAITFDTTGIDIAGVVNFIEKKAQNIIDRS.

ATP is bound at residue Gly10–Thr18.

Belongs to the cytidylate kinase family. Type 1 subfamily.

It localises to the cytoplasm. It carries out the reaction CMP + ATP = CDP + ADP. The enzyme catalyses dCMP + ATP = dCDP + ADP. The chain is Cytidylate kinase from Streptococcus mutans serotype c (strain ATCC 700610 / UA159).